Consider the following 116-residue polypeptide: MPNVQKTVVKKSHKFVIDCTAPAGKIVDVAAFEKYLHDRIKVDNKVSNLGSNVVISKDKSKIIINTTIPFSKRYLKYLTKKFLKFKQIRDFLRVVATTKNTYELRYFNIGDSESQE.

The protein belongs to the eukaryotic ribosomal protein eL22 family.

This Dictyostelium discoideum (Social amoeba) protein is Large ribosomal subunit protein eL22B (rpl22a).